Consider the following 235-residue polypeptide: 7-cyano-7-deazaguanine synthase (235 aa).

ATP is bound at residue 9–19 (FSGGQDSTTCL). Zn(2+)-binding residues include Cys-197, Cys-212, Cys-215, and Cys-218.

The protein belongs to the QueC family. Zn(2+) serves as cofactor.

The enzyme catalyses 7-carboxy-7-deazaguanine + NH4(+) + ATP = 7-cyano-7-deazaguanine + ADP + phosphate + H2O + H(+). Its pathway is purine metabolism; 7-cyano-7-deazaguanine biosynthesis. In terms of biological role, catalyzes the ATP-dependent conversion of 7-carboxy-7-deazaguanine (CDG) to 7-cyano-7-deazaguanine (preQ(0)). This chain is 7-cyano-7-deazaguanine synthase, found in Polaromonas sp. (strain JS666 / ATCC BAA-500).